Reading from the N-terminus, the 262-residue chain is Pyridoxine 5'-phosphate synthase (262 aa).

Residue Asn6 coordinates 3-amino-2-oxopropyl phosphate. 8-9 (DH) contacts 1-deoxy-D-xylulose 5-phosphate. Arg17 contacts 3-amino-2-oxopropyl phosphate. His43 acts as the Proton acceptor in catalysis. Positions 45 and 50 each coordinate 1-deoxy-D-xylulose 5-phosphate. Glu70 functions as the Proton acceptor in the catalytic mechanism. Residue Thr102 participates in 1-deoxy-D-xylulose 5-phosphate binding. Catalysis depends on His215, which acts as the Proton donor. Residues Gly216 and 237–238 (GH) each bind 3-amino-2-oxopropyl phosphate.

Belongs to the PNP synthase family. As to quaternary structure, homooctamer; tetramer of dimers.

It is found in the cytoplasm. The catalysed reaction is 3-amino-2-oxopropyl phosphate + 1-deoxy-D-xylulose 5-phosphate = pyridoxine 5'-phosphate + phosphate + 2 H2O + H(+). The protein operates within cofactor biosynthesis; pyridoxine 5'-phosphate biosynthesis; pyridoxine 5'-phosphate from D-erythrose 4-phosphate: step 5/5. Its function is as follows. Catalyzes the complicated ring closure reaction between the two acyclic compounds 1-deoxy-D-xylulose-5-phosphate (DXP) and 3-amino-2-oxopropyl phosphate (1-amino-acetone-3-phosphate or AAP) to form pyridoxine 5'-phosphate (PNP) and inorganic phosphate. The polypeptide is Pyridoxine 5'-phosphate synthase (Helicobacter pylori (strain G27)).